The chain runs to 113 residues: Putative pterin-4-alpha-carbinolamine dehydratase (113 aa).

Belongs to the pterin-4-alpha-carbinolamine dehydratase family.

It carries out the reaction (4aS,6R)-4a-hydroxy-L-erythro-5,6,7,8-tetrahydrobiopterin = (6R)-L-erythro-6,7-dihydrobiopterin + H2O. This is Putative pterin-4-alpha-carbinolamine dehydratase from Nitrosomonas eutropha (strain DSM 101675 / C91 / Nm57).